Reading from the N-terminus, the 349-residue chain is Fructose-1,6-bisphosphatase class 1 (349 aa).

Residues glutamate 91, aspartate 110, leucine 112, and aspartate 113 each contribute to the Mg(2+) site. Residues 113 to 116 (DGSS) and asparagine 205 contribute to the substrate site. Residue glutamate 277 participates in Mg(2+) binding.

It belongs to the FBPase class 1 family. Homotetramer. The cofactor is Mg(2+).

It localises to the cytoplasm. It catalyses the reaction beta-D-fructose 1,6-bisphosphate + H2O = beta-D-fructose 6-phosphate + phosphate. It participates in carbohydrate biosynthesis; gluconeogenesis. The chain is Fructose-1,6-bisphosphatase class 1 from Sinorhizobium medicae (strain WSM419) (Ensifer medicae).